We begin with the raw amino-acid sequence, 101 residues long: MAKQSMKARDVKRVKLAEKFYAKRMELKKIISDANSSDEDRWDAVLKLQSLPRDASPSRQRNRCRQTGRPHGVLRKFGLSRIKVREAAMRGEIPGLKKASW.

This sequence belongs to the universal ribosomal protein uS14 family. In terms of assembly, part of the 30S ribosomal subunit. Contacts proteins S3 and S10.

Functionally, binds 16S rRNA, required for the assembly of 30S particles and may also be responsible for determining the conformation of the 16S rRNA at the A site. The sequence is that of Small ribosomal subunit protein uS14 from Actinobacillus succinogenes (strain ATCC 55618 / DSM 22257 / CCUG 43843 / 130Z).